The following is a 68-amino-acid chain: Large ribosomal subunit protein bL35 (68 aa).

This sequence belongs to the bacterial ribosomal protein bL35 family.

This is Large ribosomal subunit protein bL35 from Rickettsia akari (strain Hartford).